Here is a 610-residue protein sequence, read N- to C-terminus: Modifier of mdg4 (610 aa).

Positions 1–160 (MADDEQFSLC…QQPRASARYK (160 aa)) are self-association. The tract at residues 1–308 (MADDEQFSLC…EEAEYIDLPM (308 aa)) is interaction with Chi. Positions 32-98 (VDVSLAAEGQ…MYCGEVNVKQ (67 aa)) constitute a BTB domain. Disordered stretches follow at residues 115–156 (GLTD…PRAS), 219–259 (VSTN…DSTT), 311–339 (PTKS…DDTY), and 386–432 (ESSF…PKPK). Residues 122-135 (APQPPQESSPPPAA) are compositionally biased toward pro residues. Residues 136 to 156 (PHVQQQQIPAQRVQRQQPRAS) are compositionally biased toward low complexity. Polar residues predominate over residues 222 to 238 (NKRSAQRSSLTPASSSA). Ser-230 carries the post-translational modification Phosphoserine. The span at 312–325 (TKSEPDYSEDHGDA) shows a compositional bias: basic and acidic residues. Over residues 386-400 (ESSFVDTSGDQGNTE) the composition is skewed to polar residues. Residues 401–410 (AQAATSASAT) are compositionally biased toward low complexity. Over residues 422-432 (TKVEDQTPKPK) the composition is skewed to basic and acidic residues. The FLYWCH-type zinc finger occupies 452–512 (YASTTKGGVK…VFPYEGEHVH (61 aa)). Positions 551-610 (LEEADDKEDEDFEEFEIQEIDEIELDEPEKTPAKEEEVDPNDFREKIKRRLQKALQNKKK) are interaction with su(Hw). Positions 567–577 (IQEIDEIELDE) are enriched in acidic residues. The interval 567–595 (IQEIDEIELDEPEKTPAKEEEVDPNDFRE) is disordered. Over residues 578-595 (PEKTPAKEEEVDPNDFRE) the composition is skewed to basic and acidic residues.

In terms of assembly, can self-associate. Interacts with Chi. Interacts with Top2. Isoform mod2.2: Component of the gypsy chromatin insulator complex, composed of Cp190, mod(mdg4) and su(Hw). The gypsy chromatin insulator complex interacts with Topors via mod(mdg4) and su(Hw). Isoform mod2.2 interacts with Trl/GAGA and interaction with this protein may bypass the repressive effects of the su(Hw) insulator.

It localises to the nucleus. Its subcellular location is the chromosome. Functionally, component of the gypsy chromatin insulator complex which is required for the function of the gypsy chromatin insulator and other endogenous chromatin insulators. Chromatin insulators are regulatory elements which establish independent domains of transcriptional activity within eukaryotic genomes. Insulators have two defining properties; they can block the communication between an enhancer and a promoter when placed between them and can also buffer transgenes from position effect variegation (PEV). Insulators are proposed to structure the chromatin fiber into independent domains of differing transcriptional potential by promoting the formation of distinct chromatin loops. This chromatin looping may involve the formation of insulator bodies, where homotypic interactions between individual subunits of the insulator complex could promote the clustering of widely spaced insulators at the nuclear periphery. Within the gypsy insulator complex, this protein may control the nature of the repressive effect of su(Hw): in the absence of mod(mdg4) protein, su(Hw) exerts a bidirectional silencing effect, whereas in the presence of mod(mdg4), the silencing effect is unidirectional. Isoform H is specifically required to maintain the pairing of achiasmate homologs in male meiosis I which is mediated by the rDNA repeats on the achiasmate X-Y bivalents. Isoform H also plays a role in apoptotic regulatory pathways. This is Modifier of mdg4 from Drosophila melanogaster (Fruit fly).